We begin with the raw amino-acid sequence, 363 residues long: Chorismate synthase (363 aa).

NADP(+)-binding residues include Arg-48 and Arg-54. FMN contacts are provided by residues 125–127 (RSS), 237–238 (NA), Gly-277, 292–296 (KPTSS), and Arg-318.

Belongs to the chorismate synthase family. Homotetramer. The cofactor is FMNH2.

The catalysed reaction is 5-O-(1-carboxyvinyl)-3-phosphoshikimate = chorismate + phosphate. It functions in the pathway metabolic intermediate biosynthesis; chorismate biosynthesis; chorismate from D-erythrose 4-phosphate and phosphoenolpyruvate: step 7/7. In terms of biological role, catalyzes the anti-1,4-elimination of the C-3 phosphate and the C-6 proR hydrogen from 5-enolpyruvylshikimate-3-phosphate (EPSP) to yield chorismate, which is the branch point compound that serves as the starting substrate for the three terminal pathways of aromatic amino acid biosynthesis. This reaction introduces a second double bond into the aromatic ring system. This is Chorismate synthase from Pseudomonas putida (strain W619).